Reading from the N-terminus, the 340-residue chain is Deubiquitinase SseL (340 aa).

Residue histidine 222 is part of the active site. Cysteine 284 functions as the Nucleophile in the catalytic mechanism.

Belongs to the peptidase C79 family.

It localises to the secreted. Its subcellular location is the host cytoplasm. Functionally, effector proteins function to alter host cell physiology and promote bacterial survival in host tissues. This protease targets the host cell ubiquitin pathway by acting as a deubiquitinase in infected host cells. The polypeptide is Deubiquitinase SseL (sseL) (Salmonella arizonae (strain ATCC BAA-731 / CDC346-86 / RSK2980)).